A 410-amino-acid chain; its full sequence is Na(+)/H(+) antiporter NhaS4 (410 aa).

11 helical membrane-spanning segments follow: residues 7-27 (LLIL…GLLF), 33-53 (PPVI…LGLL), 69-89 (FLYL…GLEL), 107-127 (VSIF…LYSL), 135-155 (FIPF…PVLA), 173-193 (LTCA…AIAV), 199-219 (IFGA…MVTL), 241-261 (LLTF…WIGI), 291-311 (FVST…TDLG), 319-339 (WAVC…GVYV), and 376-396 (GVIS…TTII).

It belongs to the monovalent cation:proton antiporter 2 (CPA2) transporter (TC 2.A.37) family.

Its subcellular location is the membrane. Na(+)/H(+) antiporter. The protein is Na(+)/H(+) antiporter NhaS4 (nhaS4) of Synechocystis sp. (strain ATCC 27184 / PCC 6803 / Kazusa).